The following is a 167-amino-acid chain: Inclusion membrane protein G (167 aa).

The next 2 helical transmembrane spans lie at 37 to 57 (LSLFAVFASGSLSILSAAVLF) and 63 to 83 (VLPYLLILTTALLGFVCAVIV). Disordered stretches follow at residues 97 to 136 (KRSPEEIEGAARPSDQQESGGRLSEESASPQASPTSSTFG) and 148 to 167 (VSGAFDDINKDNSRSRSHSF). The segment covering 122-134 (ESASPQASPTSST) has biased composition (low complexity). The Phosphorylation-dependent binding motif motif lies at 161–166 (RSRSHS). Serine 166 is modified (phosphoserine).

In terms of processing, phosphorylated by chlamydial kinase Pnk1.

The protein localises to the secreted. The protein resides in the host vacuole. Its subcellular location is the host pathogen-containing vacuole. It is found in the host pathogen-containing vacuole membrane. Inclusion membrane protein probably involved in early modification events of the chlamydial inclusion. Binds to the host cell 14-3-3 beta (YWHAB); phosphorylation of Ser-166 is probably required. In Chlamydia trachomatis serovar D (strain ATCC VR-885 / DSM 19411 / UW-3/Cx), this protein is Inclusion membrane protein G (incG).